Reading from the N-terminus, the 391-residue chain is uncharacterized protein (391 aa).

A signal peptide spans 1–20 (MRKLFLLSILMIGVIVAFAG). The S-archaeol cysteine moiety is linked to residue Cys-21. The 274-residue stretch at 104 to 377 (RIVTDFYCPI…DFAKMIHPEL (274 aa)) folds into the Fe/B12 periplasmic-binding domain.

The protein resides in the cell membrane. This is an uncharacterized protein from Methanocaldococcus jannaschii (strain ATCC 43067 / DSM 2661 / JAL-1 / JCM 10045 / NBRC 100440) (Methanococcus jannaschii).